The following is a 307-amino-acid chain: MTLTEIIFVLTGTCAILVFGGKIASLIMMLITKLFCPLPEAFFTSLGKWAVITGGSDGIGRAYAEELSKQGMSVIIISRNQEKLDRAAKKIELNTGGKVKVIAADFTKDDIYGHITENIEGLDIGVLVNNVGILPSQIPCKLLETSDLEERIYDIVNCNVKSMVKMCRIVLPGMQQRRRGVILNVSSGIAKIPCPIYTLYAASKVFVERFSQGLQAEYISKGIIIQTVAPFGVSTAMTGHQKPDMVTFTAEEFVRSSLKYLKTGDQTYGSITHTLLGRIVQSIPTWVLQSETFQHHFQEYVKNRDRR.

The helical transmembrane segment at 6-26 (IIFVLTGTCAILVFGGKIASL) threads the bilayer. NADP(+) is bound at residue 47–76 (GKWAVITGGSDGIGRAYAEELSKQGMSVII). S187 serves as a coordination point for substrate. Catalysis depends on Y200, which acts as the Proton acceptor.

It belongs to the short-chain dehydrogenases/reductases (SDR) family. In terms of tissue distribution, expression shows strong sexual dimorphism. In female, highly expressed in ovaries, and at lower levels in skin muscle, eyes and liver. In males, strongly expressed in liver and at lower levels in testis, spleen, kidney, intestine and muscle.

It localises to the endoplasmic reticulum. Its subcellular location is the membrane. It carries out the reaction a 17beta-hydroxy steroid + NADP(+) = a 17-oxo steroid + NADPH + H(+). The catalysed reaction is testosterone + NADP(+) = androst-4-ene-3,17-dione + NADPH + H(+). It catalyses the reaction 3beta-hydroxyandrost-5-en-17-one + NADPH + H(+) = androst-5-en-3beta,17beta-diol + NADP(+). The enzyme catalyses 3beta-hydroxy-5alpha-androstan-17-one + NADPH + H(+) = 5alpha-androstane-3beta,17beta-diol + NADP(+). It carries out the reaction androst-4-ene-3,11,17-trione + NADPH + H(+) = 17beta-hydroxyandrost-4-ene-3,11-dione + NADP(+). The catalysed reaction is 11beta-hydroxyandrost-4-ene-3,17-dione + NADPH + H(+) = 11beta,17beta-dihydroxyandrost-4-ene-3-one + NADP(+). The protein operates within hormone biosynthesis; testosterone biosynthesis. It functions in the pathway steroid metabolism. Catalyzes the conversion of 17-oxosteroids to 17beta-hydroxysteroids in the presence of NADPH. Favors the reduction of androstenedione to testosterone. Testosterone is the key androgen driving male development and function. Among further tested androgens epiandrosterone and dehydroepiandrosterone are accepted as substrates and reduced at C-17. Can also reduce 11-ketoandrostenedione as well as 11beta-hydroxyandrostenedione at C-17 to the respective testosterone forms. Cannot use androsterone and androstanedione as substrates. The polypeptide is 17-beta-hydroxysteroid dehydrogenase type 3 (hsd17b3) (Danio rerio (Zebrafish)).